Here is a 332-residue protein sequence, read N- to C-terminus: Fructose-1,6-bisphosphatase class 1 (332 aa).

The Mg(2+) site is built by Glu-89, Asp-110, Leu-112, and Asp-113. Substrate-binding positions include 113–116, Asn-206, Tyr-239, 257–259, and Lys-269; these read DGSS and YLY. Mg(2+) is bound at residue Glu-275.

The protein belongs to the FBPase class 1 family. In terms of assembly, homotetramer. It depends on Mg(2+) as a cofactor.

The protein localises to the cytoplasm. The enzyme catalyses beta-D-fructose 1,6-bisphosphate + H2O = beta-D-fructose 6-phosphate + phosphate. Its pathway is carbohydrate biosynthesis; gluconeogenesis. In Enterobacter sp. (strain 638), this protein is Fructose-1,6-bisphosphatase class 1.